The following is a 328-amino-acid chain: Malate dehydrogenase (328 aa).

12 to 18 (GAAGQIA) contributes to the NAD(+) binding site. Substrate contacts are provided by Arg93 and Arg99. Residues Asn106, Gln113, and 130–132 (VGN) contribute to the NAD(+) site. Positions 132 and 163 each coordinate substrate. His188 functions as the Proton acceptor in the catalytic mechanism.

The protein belongs to the LDH/MDH superfamily. MDH type 2 family.

The catalysed reaction is (S)-malate + NAD(+) = oxaloacetate + NADH + H(+). Catalyzes the reversible oxidation of malate to oxaloacetate. The polypeptide is Malate dehydrogenase (Burkholderia cenocepacia (strain ATCC BAA-245 / DSM 16553 / LMG 16656 / NCTC 13227 / J2315 / CF5610) (Burkholderia cepacia (strain J2315))).